The chain runs to 430 residues: MELKNLIIKTLKEEVVPAMGCTEPVAVALGCAKAKELLGDMDITKAEILVSPNIYKNGLSVGIPNTNEVGLFIAGALGIVAGKSEKDLQVLSGIVEEDVVIAHELLKEEKVTIDIKPTIEKIYVEVNLYAEEGSSTAIIQGRHNEFVYLAQSGNILLNGLQEATSSTKSTNPLFEMKIRDIIKEISELGMDEIGFMLEGLEMNEKIAMEGLKNTSGISVGRTIYENIQKGILADDLMNTAMMLTAAGSDARMSGIRMPVMSSSGSGNNGLTAILPILAYHKKFPVEDRPLAQALAISHMTNSYIKHYIGRLSALCGCGVAAGTGASISIAWLMGADAEKIDGTIKNMIGNLSGMICDGAKVGCALKLATSASAAIQSALLALNGHVIPSKNGIIGDTAEDTIKNLGILSEEGMYFADHTILKVMKAMEGV.

The protein belongs to the UPF0597 family.

In Alkaliphilus oremlandii (strain OhILAs) (Clostridium oremlandii (strain OhILAs)), this protein is UPF0597 protein Clos_2050.